We begin with the raw amino-acid sequence, 99 residues long: Aspartyl/glutamyl-tRNA(Asn/Gln) amidotransferase subunit C (99 aa).

This sequence belongs to the GatC family. As to quaternary structure, heterotrimer of A, B and C subunits.

The enzyme catalyses L-glutamyl-tRNA(Gln) + L-glutamine + ATP + H2O = L-glutaminyl-tRNA(Gln) + L-glutamate + ADP + phosphate + H(+). It catalyses the reaction L-aspartyl-tRNA(Asn) + L-glutamine + ATP + H2O = L-asparaginyl-tRNA(Asn) + L-glutamate + ADP + phosphate + 2 H(+). Functionally, allows the formation of correctly charged Asn-tRNA(Asn) or Gln-tRNA(Gln) through the transamidation of misacylated Asp-tRNA(Asn) or Glu-tRNA(Gln) in organisms which lack either or both of asparaginyl-tRNA or glutaminyl-tRNA synthetases. The reaction takes place in the presence of glutamine and ATP through an activated phospho-Asp-tRNA(Asn) or phospho-Glu-tRNA(Gln). This Cupriavidus necator (strain ATCC 17699 / DSM 428 / KCTC 22496 / NCIMB 10442 / H16 / Stanier 337) (Ralstonia eutropha) protein is Aspartyl/glutamyl-tRNA(Asn/Gln) amidotransferase subunit C.